The chain runs to 659 residues: Tail sheath protein (659 aa).

This sequence belongs to the myoviridae tail sheath protein family. Hexamer.

The protein localises to the virion. In terms of biological role, structural component of the bacteriophage tail which consists of a contractile sheath, a tube and a baseplate. The central cylindrical segment of the tail consists of a rigid tube, composed of multiple copies of gp19, surrounded by the outer contractile sheath assembled from gp18 subunits. A total of 138 copies of gp18 arranged into 23 hexameric rings constitutes the sheath. During infection, contraction of the sheath drives the central tube through the host outer membrane, creating a channel for DNA ejection from the capsid into the host cell. This Escherichia coli (Bacteriophage T4) protein is Tail sheath protein (18).